The chain runs to 268 residues: Ribosomal RNA small subunit methyltransferase A (268 aa).

Positions 21, 23, 48, 69, 94, and 115 each coordinate S-adenosyl-L-methionine.

This sequence belongs to the class I-like SAM-binding methyltransferase superfamily. rRNA adenine N(6)-methyltransferase family. RsmA subfamily.

The protein localises to the cytoplasm. The catalysed reaction is adenosine(1518)/adenosine(1519) in 16S rRNA + 4 S-adenosyl-L-methionine = N(6)-dimethyladenosine(1518)/N(6)-dimethyladenosine(1519) in 16S rRNA + 4 S-adenosyl-L-homocysteine + 4 H(+). Specifically dimethylates two adjacent adenosines (A1518 and A1519) in the loop of a conserved hairpin near the 3'-end of 16S rRNA in the 30S particle. May play a critical role in biogenesis of 30S subunits. This Saccharophagus degradans (strain 2-40 / ATCC 43961 / DSM 17024) protein is Ribosomal RNA small subunit methyltransferase A.